Here is a 108-residue protein sequence, read N- to C-terminus: UPF0102 protein Shewmr4_3685 (108 aa).

The protein belongs to the UPF0102 family.

The polypeptide is UPF0102 protein Shewmr4_3685 (Shewanella sp. (strain MR-4)).